The primary structure comprises 283 residues: MALDLTAYFDRINYRGATDPTLDVLQDLVTVHSRTIPFENLDPLLGVPVDDLSPQALADKLVLRRRGGYCFEHNGLMGYVLAELGYRVRRFAARVVWKLAPDAPLPPQTHTLLGVTFPGSGGCYLVDVGFGGQTPTSPLRLETGAVQPTTHEPYRLEDRVDGFVLQAMVRDTWQTLYEFTTQTRPQIDLKVASWYASTHPASKFVTGLTAAVITDDARWNLSGRDLAVHRAGGTEKIRLADAAAVVDTLSERFGINVADIGERGALETRIDELLARQPGADAP.

Residue Cys70 is the Acyl-thioester intermediate of the active site. Residues His110 and Asp127 contribute to the active site.

It belongs to the arylamine N-acetyltransferase family. Homodimer and homotetramer.

The catalysed reaction is an arylamine + acetyl-CoA = an N-acetylarylamine + CoA. Its function is as follows. Catalyzes the transfer of the acetyl group from acetyl coenzyme A to the free amino group of arylamines and hydrazines. Is able to utilize not only acetyl-CoA, but also n-propionyl-CoA and acetoacetyl-CoA as acyl donors, although at a lower rate. As acetyl-CoA and propionyl-CoA are products of cholesterol catabolism and the nat gene is likely present in the same operon than genes involved in cholesterol degradation, this enzyme could have a role in the utilization and regulation of these CoA species. The sequence is that of Arylamine N-acetyltransferase (nat) from Mycobacterium bovis (strain ATCC BAA-935 / AF2122/97).